The following is a 342-amino-acid chain: Uroporphyrinogen decarboxylase (342 aa).

Residues 24 to 28, Asp74, Tyr151, Ser206, and His322 each bind substrate; that span reads RQAGR.

Belongs to the uroporphyrinogen decarboxylase family. As to quaternary structure, homodimer.

Its subcellular location is the cytoplasm. The catalysed reaction is uroporphyrinogen III + 4 H(+) = coproporphyrinogen III + 4 CO2. The protein operates within porphyrin-containing compound metabolism; protoporphyrin-IX biosynthesis; coproporphyrinogen-III from 5-aminolevulinate: step 4/4. Functionally, catalyzes the decarboxylation of four acetate groups of uroporphyrinogen-III to yield coproporphyrinogen-III. This is Uroporphyrinogen decarboxylase from Paracoccus denitrificans (strain Pd 1222).